The primary structure comprises 386 residues: Porin PorA (386 aa).

Residues 1 to 35 (MKRTLGHALIIIGAALIVIAVLLPTFLVPRLRVIP) form the signal peptide. Residues 53 to 63 (DSSQLGKNEPT) are compositionally biased toward polar residues. The tract at residues 53–78 (DSSQLGKNEPTPNRKNDPRCKAETDE) is disordered. Residues 64–78 (PNRKNDPRCKAETDE) show a composition bias toward basic and acidic residues.

This sequence belongs to the PorA family.

It localises to the secreted. It is found in the cell wall. Functionally, forms water-filled channels that favor the permeation of cations. This chain is Porin PorA, found in Corynebacterium amycolatum.